The following is an 812-amino-acid chain: Endogenous retrovirus group K member 18 Pol protein (812 aa).

The Reverse transcriptase domain occupies leucine 57–isoleucine 245. The LPQG motif lies at leucine 161–glycine 164. The YXDD motif lies at tyrosine 195–aspartate 198. The RNase H type-1 domain maps to leucine 460–isoleucine 590. Residues aspartate 469, glutamate 497, aspartate 517, and aspartate 582 each coordinate Mg(2+). The Integrase-type zinc finger occupies serine 587 to glutamine 628. Residues histidine 596, histidine 600, cysteine 624, and cysteine 627 each coordinate Zn(2+). The Integrase catalytic domain occupies alanine 637 to lysine 803.

This sequence belongs to the beta type-B retroviral polymerase family. HERV class-II K(HML-2) pol subfamily.

The enzyme catalyses DNA(n) + a 2'-deoxyribonucleoside 5'-triphosphate = DNA(n+1) + diphosphate. It catalyses the reaction Endonucleolytic cleavage to 5'-phosphomonoester.. In terms of biological role, early post-infection, the reverse transcriptase converts the viral RNA genome into double-stranded viral DNA. The RNase H domain of the reverse transcriptase performs two functions. It degrades the RNA template and specifically removes the RNA primer from the RNA/DNA hybrid. Following nuclear import, the integrase catalyzes the insertion of the linear, double-stranded viral DNA into the host cell chromosome. Endogenous Pol proteins may have kept, lost or modified their original function during evolution. In Homo sapiens (Human), this protein is Endogenous retrovirus group K member 18 Pol protein (ERVK-18).